Here is a 552-residue protein sequence, read N- to C-terminus: Sensor histidine kinase DpiB (552 aa).

Residues 1 to 21 (MLQLNENKQFAFFQRLAFPLR) are Cytoplasmic-facing. A helical membrane pass occupies residues 22-42 (IFLLILVFSIFVIAALAQYFT). Residues 43–182 (ASFEDYLTLH…DSWRAEFLLP (140 aa)) are Periplasmic-facing. The helical transmembrane segment at 183–203 (MAGVFVVLLGILMLLSWFLAA) threads the bilayer. At 204-552 (HIRRQMMGME…NDSSINPIDR (349 aa)) the chain is on the cytoplasmic side. The 71-residue stretch at 222–292 (RQQEALFSSV…IDEKRQDVVA (71 aa)) folds into the PAS domain. One can recognise a Histidine kinase domain in the interval 344 to 541 (TLRHEHLNWM…LFSIYIPKVK (198 aa)). Position 347 is a phosphohistidine; by autocatalysis (His347).

Autophosphorylated.

The protein localises to the cell inner membrane. It catalyses the reaction ATP + protein L-histidine = ADP + protein N-phospho-L-histidine.. Its activity is regulated as follows. Autophosphorylation is induced in vitro by dithiothreitol (DTT). Its function is as follows. Member of the two-component regulatory system DpiA/DpiB, which is essential for expression of citrate-specific fermentation genes and genes involved in plasmid inheritance. Could be involved in response to both the presence of citrate and external redox conditions. Functions as a sensor kinase that phosphorylates DpiA in the presence of citrate. The protein is Sensor histidine kinase DpiB (dpiB) of Escherichia coli (strain K12).